A 31-amino-acid polypeptide reads, in one-letter code: LysM-domain containing protein (31 aa).

Residues 1 to 28 (YSPSLTDLQSYNAMNGPALKAGDILAVP) form a LysM 1 repeat.

The chain is LysM-domain containing protein from Jatropha curcas (Barbados nut).